Here is a 90-residue protein sequence, read N- to C-terminus: Small ribosomal subunit protein bS18 (90 aa).

This sequence belongs to the bacterial ribosomal protein bS18 family. In terms of assembly, part of the 30S ribosomal subunit. Forms a tight heterodimer with protein bS6.

Binds as a heterodimer with protein bS6 to the central domain of the 16S rRNA, where it helps stabilize the platform of the 30S subunit. This Bordetella bronchiseptica (strain ATCC BAA-588 / NCTC 13252 / RB50) (Alcaligenes bronchisepticus) protein is Small ribosomal subunit protein bS18.